The following is a 428-amino-acid chain: Enolase (428 aa).

Residue Gln163 participates in (2R)-2-phosphoglycerate binding. The Proton donor role is filled by Glu205. Positions 242, 285, and 312 each coordinate Mg(2+). (2R)-2-phosphoglycerate contacts are provided by Lys337, Arg366, Ser367, and Lys388. The Proton acceptor role is filled by Lys337.

The protein belongs to the enolase family. Mg(2+) serves as cofactor.

The protein localises to the cytoplasm. It is found in the secreted. It localises to the cell surface. It carries out the reaction (2R)-2-phosphoglycerate = phosphoenolpyruvate + H2O. Its pathway is carbohydrate degradation; glycolysis; pyruvate from D-glyceraldehyde 3-phosphate: step 4/5. In terms of biological role, catalyzes the reversible conversion of 2-phosphoglycerate (2-PG) into phosphoenolpyruvate (PEP). It is essential for the degradation of carbohydrates via glycolysis. This chain is Enolase, found in Persephonella marina (strain DSM 14350 / EX-H1).